We begin with the raw amino-acid sequence, 304 residues long: UTP--glucose-1-phosphate uridylyltransferase 1 (304 aa).

It belongs to the UDPGP type 2 family.

The enzyme catalyses alpha-D-glucose 1-phosphate + UTP + H(+) = UDP-alpha-D-glucose + diphosphate. Its pathway is carbohydrate metabolism; nucleotide-sugar metabolism. The polypeptide is UTP--glucose-1-phosphate uridylyltransferase 1 (hasC1) (Streptococcus pyogenes serotype M1).